Reading from the N-terminus, the 155-residue chain is Ciliary microtubule inner protein 2C (155 aa).

It belongs to the CIMIP2 family.

The protein localises to the cytoplasm. The protein resides in the cytoskeleton. It is found in the cilium axoneme. Functionally, microtubule inner protein (MIP) part of the dynein-decorated doublet microtubules (DMTs) in cilia axoneme, which is required for motile cilia beating. In Xenopus laevis (African clawed frog), this protein is Ciliary microtubule inner protein 2C (cimip2ca).